The sequence spans 165 residues: Pro-MCH (165 aa).

Residues 1–21 (MAKMSLSSYMLMLAFSLFSHG) form the signal peptide. Basic and acidic residues predominate over residues 69–82 (DESGFMKDDDDKTT). The interval 69–89 (DESGFMKDDDDKTTKNTGSKQ) is disordered. At isoleucine 143 the chain carries Isoleucine amide. Cysteine 153 and cysteine 162 are joined by a disulfide.

This sequence belongs to the melanin-concentrating hormone family. Pro-MCH is processed differentially in the brain and in peripheral organs producing two neuropeptides; NEI and MCH. A third peptide, NGE, may also be produced. Preferential processing in neurons by prohormone convertase 2 (PC2) generates NEI. MCH is generated in neurons of the lateral hypothalmic area by several prohormone convertases including PC1/3, PC2 and PC5/6. MCH is present in all regions of the brain and in neurointermediate lobe of the pituarity gland, with highest concentrations in the hypothalamus. Also expressed to a much lesser extent in stomach, lamina propria of both duodenum and colon, ovary, thymus, pancreas, adrenal gland and testis (spermatogonia, early spermatocytes and Sertoli cells). Weak expression in heart and lung. The other peptides are expressed at least in Sertoli cells, nei being also expressed in brain, stomach and proximal duodenum. In brain exclusively mature mch and nei peptides are present. In peripheral tissues a large product, encompassing the NEI and MCH domains of the precursor, is found predominantly. At low levels fully processed MCH and NEI peptides are present in gut. No expression in peripheral blood.

It localises to the secreted. Its function is as follows. MCH inhibits ACTH secretion at the end of the light on period which corresponds to the peak of the circadian rhythm in ACTH. Inhibits also stress induced ACTH release during the light off period of the cycle. Involved as a neurotransmitter or neuromodulator in a broad array of neuronal functions. Stimulates sexual behavior when injected into the ventromedial nucleus, this effect is antagonized by NEI. In the medial preoptic area, stimulates anxiety and sexual behavior. Antagonizes inhibitory effect of melanotropin alpha on exploration behavior. NEI can influence differentiation of neuronal processes in brain neurons. Affects the content of neurofilament protein in neuritogenesis (in vitro). May also be a neuromodulatory factor. In behavioral tests, it stimulates exploration and anxiety when injected into the ventromedial nucleus. Also stimulates grooming, locomotion and rearing. May antagonize the inhibitory effect of mch on ACTH release. Reduces dopamine and dopac release in the ventromedial nucleus. The protein is Pro-MCH (Pmch) of Rattus norvegicus (Rat).